The primary structure comprises 190 residues: uncharacterized protein (190 aa).

The HTH tetR-type domain occupies 1-58 (MDKRILAETFRLIKQKGFSFTMNDLAAALGTSKRTLYAYYSSKDQLVEAVVEQFIAEM). The H-T-H motif DNA-binding region spans 21–40 (TMNDLAAALGTSKRTLYAYY).

This is an uncharacterized protein from Bacillus subtilis (strain 168).